The primary structure comprises 543 residues: Glucose-6-phosphate isomerase (543 aa).

Residue Glu-353 is the Proton donor of the active site. Residues His-384 and Lys-504 contribute to the active site.

The protein belongs to the GPI family.

The protein localises to the cytoplasm. The catalysed reaction is alpha-D-glucose 6-phosphate = beta-D-fructose 6-phosphate. The protein operates within carbohydrate biosynthesis; gluconeogenesis. It participates in carbohydrate degradation; glycolysis; D-glyceraldehyde 3-phosphate and glycerone phosphate from D-glucose: step 2/4. In terms of biological role, catalyzes the reversible isomerization of glucose-6-phosphate to fructose-6-phosphate. In Roseiflexus sp. (strain RS-1), this protein is Glucose-6-phosphate isomerase.